The sequence spans 262 residues: 2-keto-4-pentenoate hydratase (262 aa).

The protein belongs to the hydratase/decarboxylase family. MhpD subfamily. The cofactor is a divalent metal cation.

The enzyme catalyses (S)-4-hydroxy-2-oxopentanoate = (2Z)-2-hydroxypenta-2,4-dienoate + H2O. It functions in the pathway aromatic compound metabolism; 3-phenylpropanoate degradation. In terms of biological role, catalyzes the conversion of 2-hydroxypentadienoic acid (enolic form of 2-oxopent-4-enoate) to 4-hydroxy-2-ketopentanoic acid. The protein is 2-keto-4-pentenoate hydratase of Burkholderia vietnamiensis (strain G4 / LMG 22486) (Burkholderia cepacia (strain R1808)).